We begin with the raw amino-acid sequence, 143 residues long: Putative pre-16S rRNA nuclease (143 aa).

It belongs to the YqgF nuclease family.

The protein resides in the cytoplasm. Could be a nuclease involved in processing of the 5'-end of pre-16S rRNA. The sequence is that of Putative pre-16S rRNA nuclease from Lactococcus lactis subsp. cremoris (strain MG1363).